The sequence spans 748 residues: Putative pre-mRNA-splicing factor ATP-dependent RNA helicase DHX32 (748 aa).

The Helicase ATP-binding domain occupies Leu-74–Glu-240. Ala-87–Ser-94 contacts ATP. In terms of domain architecture, Helicase C-terminal spans Arg-263–Asp-439. The disordered stretch occupies residues Ser-706–Gln-748.

It belongs to the DEAD box helicase family. DEAH subfamily.

It localises to the nucleus. The protein resides in the mitochondrion. The enzyme catalyses ATP + H2O = ADP + phosphate + H(+). This chain is Putative pre-mRNA-splicing factor ATP-dependent RNA helicase DHX32 (dhx32), found in Xenopus laevis (African clawed frog).